We begin with the raw amino-acid sequence, 528 residues long: T-complex protein 1 subunit gamma (528 aa).

Ser-250 is subject to Phosphoserine. Cys-364 and Cys-370 form a disulfide bridge.

The protein belongs to the TCP-1 chaperonin family. In terms of assembly, heterooligomeric complex of about 850 to 900 kDa that forms two stacked rings, 12 to 16 nm in diameter.

It is found in the cytoplasm. Molecular chaperone; assists the folding of proteins upon ATP hydrolysis. Known to play a role, in vitro, in the folding of actin and tubulin. The polypeptide is T-complex protein 1 subunit gamma (cct3) (Schizosaccharomyces pombe (strain 972 / ATCC 24843) (Fission yeast)).